A 203-amino-acid chain; its full sequence is IQ domain-containing protein F3 (203 aa).

Over residues 1 to 12 (MELDQDKKKETP) the composition is skewed to basic and acidic residues. Residues 1 to 111 (MELDQDKKKE…CETQEADRSE (111 aa)) are disordered. Residues 13–82 (EETENVNEVQ…EADKAILERS (70 aa)) adopt a coiled-coil conformation. Residues 29–38 (DEETEAEAEE) are compositionally biased toward acidic residues. Residues 39–51 (ADKAILERSDSVK) are compositionally biased toward basic and acidic residues. Residues 64–73 (DEETEAEAEE) show a composition bias toward acidic residues. Basic and acidic residues-rich tracts occupy residues 74–86 (ADKA…DSVK) and 96–111 (QIQE…DRSE). Residues 129–158 (VMLAGVKIQAWWRGTLVRRTLLLAALNAWT) form the IQ domain.

The polypeptide is IQ domain-containing protein F3 (Iqcf3) (Mus musculus (Mouse)).